A 255-amino-acid chain; its full sequence is Large ribosomal subunit protein eL8 (255 aa).

Positions 1 to 16 are enriched in basic residues; that stretch reads MPKAPKKITKPKKAEK. Residues 1–28 form a disordered region; the sequence is MPKAPKKITKPKKAEKKKNPLFQAKPRS.

It belongs to the eukaryotic ribosomal protein eL8 family.

This chain is Large ribosomal subunit protein eL8 (RPL7A), found in Tetrahymena thermophila.